A 504-amino-acid polypeptide reads, in one-letter code: Anaerobic nitric oxide reductase transcription regulator NorR (504 aa).

Aspartate 57 is subject to 4-aspartylphosphate. Residues 187–416 form the Sigma-54 factor interaction domain; that stretch reads MIGLSPGMTQ…LEHAIHRAVV (230 aa). Residues 215–222 and 278–287 contribute to the ATP site; these read GETGTGKE and ADNGTLFLDE. Residues 479–498 constitute a DNA-binding region (H-T-H motif); that stretch reads WAACARMLETDVANLHRLAK.

Its pathway is nitrogen metabolism; nitric oxide reduction. Its function is as follows. Required for the expression of anaerobic nitric oxide (NO) reductase, acts as a transcriptional activator for at least the norVW operon. Activation also requires sigma-54. The protein is Anaerobic nitric oxide reductase transcription regulator NorR of Escherichia coli O6:H1 (strain CFT073 / ATCC 700928 / UPEC).